Reading from the N-terminus, the 351-residue chain is Dual-specificity RNA methyltransferase RlmN (351 aa).

Catalysis depends on glutamate 90, which acts as the Proton acceptor. A Radical SAM core domain is found at 96 to 330 (EKDHYTACLS…ATLRKSKGSD (235 aa)). Cysteines 103 and 335 form a disulfide. Cysteine 110, cysteine 114, and cysteine 117 together coordinate [4Fe-4S] cluster. Residues 162 to 163 (GE), serine 194, 216 to 218 (SLH), and asparagine 292 contribute to the S-adenosyl-L-methionine site. Cysteine 335 acts as the S-methylcysteine intermediate in catalysis.

It belongs to the radical SAM superfamily. RlmN family. The cofactor is [4Fe-4S] cluster.

Its subcellular location is the cytoplasm. The catalysed reaction is adenosine(2503) in 23S rRNA + 2 reduced [2Fe-2S]-[ferredoxin] + 2 S-adenosyl-L-methionine = 2-methyladenosine(2503) in 23S rRNA + 5'-deoxyadenosine + L-methionine + 2 oxidized [2Fe-2S]-[ferredoxin] + S-adenosyl-L-homocysteine. It carries out the reaction adenosine(37) in tRNA + 2 reduced [2Fe-2S]-[ferredoxin] + 2 S-adenosyl-L-methionine = 2-methyladenosine(37) in tRNA + 5'-deoxyadenosine + L-methionine + 2 oxidized [2Fe-2S]-[ferredoxin] + S-adenosyl-L-homocysteine. Specifically methylates position 2 of adenine 2503 in 23S rRNA and position 2 of adenine 37 in tRNAs. m2A2503 modification seems to play a crucial role in the proofreading step occurring at the peptidyl transferase center and thus would serve to optimize ribosomal fidelity. This Solidesulfovibrio magneticus (strain ATCC 700980 / DSM 13731 / RS-1) (Desulfovibrio magneticus) protein is Dual-specificity RNA methyltransferase RlmN.